A 414-amino-acid chain; its full sequence is MSLEMFDKEIFDLTNKELERQCEGLEMIASENFTLPEVMEVMGSILTNKYAEGYPGKRYYGGCEFVDEIETLAIERCKKLFNCKFANVQPNSGSQANQGVYAALINPGDKILGMDLTHGGHLTHGAKVSSSGKMYESCFYGVELDGRIDYEKVREIAKKEKPKLIVCGASAYARVIDFAKFREIADEVGAYLFADIAHIAGLVVAGEHPSPFPHAHVVSSTTHKTLRGPRGGIIMTNDEQLAKKINSAIFPGIQGGPLMHVIAAKAVGFKFNLSDEWKVYAKQVRTNAQVLTNVLMDRKFKLVSDGTDNHLVLMSFLDREFSGKDADLALGNAGITANKNTVPGETRSPFITSGLRLGTPALTARGFKEKEMEIVSNYIADILDDINNEKLQENIKQELKKLASNFIIYERAMF.

(6S)-5,6,7,8-tetrahydrofolate is bound by residues leucine 116 and 120–122 (GHL). Lysine 224 carries the N6-(pyridoxal phosphate)lysine modification. 348 to 350 (SPF) is a binding site for (6S)-5,6,7,8-tetrahydrofolate.

Belongs to the SHMT family. In terms of assembly, homodimer. The cofactor is pyridoxal 5'-phosphate.

It localises to the cytoplasm. It catalyses the reaction (6R)-5,10-methylene-5,6,7,8-tetrahydrofolate + glycine + H2O = (6S)-5,6,7,8-tetrahydrofolate + L-serine. The protein operates within one-carbon metabolism; tetrahydrofolate interconversion. It participates in amino-acid biosynthesis; glycine biosynthesis; glycine from L-serine: step 1/1. Functionally, catalyzes the reversible interconversion of serine and glycine with tetrahydrofolate (THF) serving as the one-carbon carrier. This reaction serves as the major source of one-carbon groups required for the biosynthesis of purines, thymidylate, methionine, and other important biomolecules. Also exhibits THF-independent aldolase activity toward beta-hydroxyamino acids, producing glycine and aldehydes, via a retro-aldol mechanism. The polypeptide is Serine hydroxymethyltransferase (Campylobacter jejuni subsp. doylei (strain ATCC BAA-1458 / RM4099 / 269.97)).